The chain runs to 334 residues: Glycosylinositol phosphorylceramide mannosyl transferase 1 (334 aa).

At 1–26 (MGGGEVSKEMGACSLAYRRGDQKLRK) the chain is on the cytoplasmic side. The chain crosses the membrane as a helical; Signal-anchor for type II membrane protein span at residues 27-49 (FVTARSTKFLLFCCIAFVLVTIV). The Lumenal segment spans residues 50–334 (CRSSRPWVNS…AVDSRNLWFW (285 aa)). N58 carries N-linked (GlcNAc...) asparagine glycosylation. Residues 145–150 (DSLNNR), 166–168 (DDD), R196, and 258–262 (RNCED) contribute to the substrate site. D168 contacts Mn(2+). C260 and C305 are disulfide-bonded. Residue D262 is part of the active site. N-linked (GlcNAc...) asparagine glycosylation occurs at N271. Residues 289-302 (STGI…TEKR) and 292-302 (ISSIGGHTEKR) each bind substrate.

The protein belongs to the glycosyltransferase 64 family. The cofactor is Mn(2+). As to expression, expressed in leaves, roots, stem, and flowers.

The protein localises to the golgi apparatus membrane. It functions in the pathway protein modification; protein glycosylation. It participates in sphingolipid metabolism. Mannosyl transferase (ManT) required for the biosynthesis of mannose-carrying glycosylinositol phosphorylceramides (GIPCs). Maybe involved in cell-cell adhesion that maintains the integrity of organs by providing mechanical strength and facilitating the movement of metabolites throughout the plant during development. Prevents abscisic acid- (ABA-) mediated effects on development (e.g. cell size, flowering time, senescence). Probably implicated in beta-(1,4)-galactan biosynthesis thus being a cell-wall synthesis-related (CWSR) protein. The protein is Glycosylinositol phosphorylceramide mannosyl transferase 1 of Arabidopsis thaliana (Mouse-ear cress).